The chain runs to 337 residues: Phenylalanine--tRNA ligase alpha subunit (337 aa).

Mg(2+) is bound at residue Glu-252.

This sequence belongs to the class-II aminoacyl-tRNA synthetase family. Phe-tRNA synthetase alpha subunit type 1 subfamily. As to quaternary structure, tetramer of two alpha and two beta subunits. The cofactor is Mg(2+).

It is found in the cytoplasm. The enzyme catalyses tRNA(Phe) + L-phenylalanine + ATP = L-phenylalanyl-tRNA(Phe) + AMP + diphosphate + H(+). This chain is Phenylalanine--tRNA ligase alpha subunit, found in Francisella tularensis subsp. holarctica (strain OSU18).